Consider the following 360-residue polypeptide: Putative beta-glucosidase 15 (360 aa).

2 stretches are compositionally biased toward basic and acidic residues: residues 1-11 (MARRRMGEEGK) and 47-67 (GRREEDDAGGREKGEKRERKG). Disordered stretches follow at residues 1–21 (MARRRMGEEGKGGGWGLNGRQ) and 35–103 (GWRS…RAER). Positions 75–86 (GKRRRERRRGGR) are enriched in basic residues. Tyrosine 183 contributes to the a beta-D-glucoside binding site. A disulfide bridge connects residues cysteine 191 and cysteine 196. A beta-D-glucoside is bound by residues glutamate 254, tryptophan 301, 308–309 (EW), and phenylalanine 317. Glutamate 254 acts as the Nucleophile in catalysis. Residue asparagine 346 is glycosylated (N-linked (GlcNAc...) asparagine).

It belongs to the glycosyl hydrolase 1 family.

It catalyses the reaction Hydrolysis of terminal, non-reducing beta-D-glucosyl residues with release of beta-D-glucose.. The sequence is that of Putative beta-glucosidase 15 (BGLU15) from Oryza sativa subsp. japonica (Rice).